Here is a 1550-residue protein sequence, read N- to C-terminus: MCPPQLFILMMLLAPVVHGGKHNERHPALAAPLRHAEHSPGGPLPPRHLLQQPAAERSTAHRGQGPRGTARGVRGPGAPGAQIAAQAFSRAPIPMAVVRRELSCESYPIELRCPGTDVIMIESANYGRTDDKICDSDPAQMENIRCYLPDAYKIMSQRCNNRTQCAVVAGPDVFPDPCPGTYKYLEVQYECVPYKVEQKVFLCPGLLKGVYQSEHLFESDHQSGAWCKDPLQASDKIYYMPWTPYRTDTLTEYSSKDDFIAGRPTTTYKLPHRVDGTGFVVYDGALFFNKERTRNIVKFDLRTRIKSGEAIIANANYHDTSPYRWGGKSDIDLAVDENGLWVIYATEQNNGKIVISQLNPYTLRIEGTWDTAYDKRSASNAFMICGILYVVKSVYEDDDNEATGNKIDYIYNTDQSKDSLVDVPFPNSYQYIAAVDYNPRDNLLYVWNNYHVVKYSLDFGPLDSRSGPVHHGQVSYISPPIHLDSDLERPPVRGISTTGPLGMGSTTTSTTLRTTTWNLGRSTTPSLPGRRNRSTSTPSPAIEVLDVTTHLPSAASQIPAMEESCEAVEAREIMWFKTRQGQVAKQSCPAGTIGVSTYLCLAPDGIWDPQGPDLSNCSSPWVNHITQKLKSGETAANIARELAEQTRNHLNAGDITYSVRAMDQLVGLLDVQLRNLTPGGKDSAARSLNKLQKRERSCRAYVQAMVETVNNLLQPQALNAWRDLTTSDQLRAATMLLDTVEESAFVLADNLLKTDIVRENTDNIQLEVARLSTEGNLEDLKFPENTGHGSTIQLSANTLKQNGRNGEIRVAFVLYNNLGPYLSTENASMKLGTEAMSTNHSVIVNSPVITAAINKEFSNKVYLADPVVFTVKHIKQSEENFNPNCSFWSYSKRTMTGYWSTQGCRLLTTNKTHTTCSCNHLTNFAVLMAHVEVKHSDAVHDLLLDVITWVGILLSLVCLLICIFTFCFFRGLQSDRNTIHKNLCISLFVAELLFLIGINRTDQPIACAVFAALLHFFFLAAFTWMFLEGVQLYIMLVEVFESEHSRRKYFYLVGYGMPALIVAVSAAVDYRSYGTDKVCWLRLDTYFIWSFIGPATLIIMLNVIFLGIALYKMFHHTAILKPESGCLDNINYEDNRPFIKSWVIGAIALLCLLGLTWAFGLMYINESTVIMAYLFTIFNSLQGMFIFIFHCVLQKKVRKEYGKCLRTHCCSGKSTESSIGSGKTSGSRTPGRYSTGSQSRIRRMWNDTVRKQSESSFITGDINSSASLNRGSYLPCIQACVTYLEGLLNNARDTSVMDTLPLNGNHGNSYSIAGGEYLSNCVQIIDRGYNHNETALEKKILKELTSNYIPSYLNNHERSSEQNRNMMNKLVDNLGSGSEDDAIVLDDAASFNHEESLGLELIHEESDAPLLPPRVYSTDNHQPHHYSRRRLPQDHSESFFPLLTDEHTEDPQSPHRDSLYTSMPALAGVPAADSVTTSTQTEAAAAKGGDAEDVYYKSMPNLGSRNHVHPLHAYYQLGRGSSDGFIVPPNKDGASPEGTSKGPAHLVTSL.

The N-terminal stretch at 1-19 (MCPPQLFILMMLLAPVVHG) is a signal peptide. Over 20–948 (GKHNERHPAL…VHDLLLDVIT (929 aa)) the chain is Extracellular. The segment at 34-80 (RHAEHSPGGPLPPRHLLQQPAAERSTAHRGQGPRGTARGVRGPGAPG) is disordered. One can recognise an SUEL-type lectin domain in the interval 103–192 (SCESYPIELR…KYLEVQYECV (90 aa)). 5 disulfides stabilise this stretch: Cys104-Cys134, Cys113-Cys191, Cys146-Cys178, Cys159-Cys165, and Cys203-Cys385. Asn161 is a glycosylation site (N-linked (GlcNAc...) asparagine). Residues 202 to 461 (LCPGLLKGVY…VVKYSLDFGP (260 aa)) enclose the Olfactomedin-like domain. The interval 317-347 (YHDTSPYRWGGKSDIDLAVDENGLWVIYATE) is interaction with FLRT3. The Ca(2+) site is built by Asp332, Asn380, Ala381, and Val435. Positions 518–538 (NLGRSTTPSLPGRRNRSTSTP) are disordered. Residues Asn532, Asn616, Asn839, Asn884, and Asn910 are each glycosylated (N-linked (GlcNAc...) asparagine). In terms of domain architecture, GAIN-B spans 755 to 934 (DIVRENTDNI…AVLMAHVEVK (180 aa)). 2 cysteine pairs are disulfide-bonded: Cys885/Cys916 and Cys904/Cys918. The tract at residues 885 to 934 (CSFWSYSKRTMTGYWSTQGCRLLTTNKTHTTCSCNHLTNFAVLMAHVEVK) is GPS. The interval 922-938 (TNFAVLMAHVEVKHSDA) is stachel. The helical transmembrane segment at 949 to 969 (WVGILLSLVCLLICIFTFCFF) threads the bilayer. The Cytoplasmic segment spans residues 970-977 (RGLQSDRN). Residues 978–998 (TIHKNLCISLFVAELLFLIGI) traverse the membrane as a helical segment. The N-linked (GlcNAc...) asparagine glycan is linked to Asn999. The Extracellular portion of the chain corresponds to 999-1006 (NRTDQPIA). A helical membrane pass occupies residues 1007-1027 (CAVFAALLHFFFLAAFTWMFL). The Cytoplasmic portion of the chain corresponds to 1028–1048 (EGVQLYIMLVEVFESEHSRRK). Residues 1049-1069 (YFYLVGYGMPALIVAVSAAVD) form a helical membrane-spanning segment. The Extracellular portion of the chain corresponds to 1070–1087 (YRSYGTDKVCWLRLDTYF). A helical transmembrane segment spans residues 1088-1108 (IWSFIGPATLIIMLNVIFLGI). Residues 1109–1141 (ALYKMFHHTAILKPESGCLDNINYEDNRPFIKS) lie on the Cytoplasmic side of the membrane. Residues 1142–1162 (WVIGAIALLCLLGLTWAFGLM) traverse the membrane as a helical segment. The Extracellular segment spans residues 1163–1168 (YINEST). Asn1165 carries an N-linked (GlcNAc...) asparagine glycan. A helical membrane pass occupies residues 1169–1189 (VIMAYLFTIFNSLQGMFIFIF). At 1190-1550 (HCVLQKKVRK…KGPAHLVTSL (361 aa)) the chain is on the cytoplasmic side. Positions 1213-1236 (KSTESSIGSGKTSGSRTPGRYSTG) are disordered. Ser1253 is subject to Phosphoserine. Disordered regions lie at residues 1410-1435 (LLPP…PQDH) and 1528-1550 (PPNK…VTSL). Ser1535 carries the phosphoserine modification. Positions 1545–1550 (HLVTSL) match the PDZ-binding motif.

The protein belongs to the G-protein coupled receptor 2 family. LN-TM7 subfamily. In terms of assembly, heterodimer of 2 chains generated by proteolytic processing; the large extracellular N-terminal fragment and the membrane-bound C-terminal fragment predominantly remain associated and non-covalently linked. Interacts (via olfactomedin-like domain) with FLRT1 (via extracellular domain). Interacts (via olfactomedin-like domain) with FLRT2 (via extracellular domain). Interacts (via olfactomedin-like domain) with FLRT3 (via extracellular domain); the interaction is direct. Interacts (via extracellular domain) with TENM1. Interacts (via extracellular domain) with TENM2. Interacts (via extracellular domain) with TENM3. Identified in a complex with FLRT3 and UNC5B; does not interact with UNC5B by itself. Identified in a complex with FLRT3 and UNC5D; does not interact with UNC5D by itself. Interacts (via PDZ-binding motif) with SHANK3. Interacts (via PDZ-binding motif) with DLG4. Post-translationally, autoproteolytically processed at the GPS region of the GAIN-B domain; this cleavage modulates receptor activity. As to expression, predominantly expressed in brain, followed by heart, placenta, pancreas, kidney and testis.

The protein resides in the cell membrane. Its subcellular location is the postsynaptic cell membrane. The protein localises to the cell projection. It localises to the axon. It is found in the cell junction. Forms a heterodimer of 2 chains generated by proteolytic processing that remain associated through non-covalent interactions mediated by the GAIN-B domain. In the inactivated receptor, the Stachel sequence (also named stalk) is embedded in the GAIN-B domain, where it adopts a beta-strand conformation. On activation, the Stachel moves into the 7 transmembrane region and adopts a twisted hook-shaped configuration that forms contacts within the receptor, leading to coupling of a G-alpha protein, which activates signaling. The cleaved GAIN-B and N-terminal domains can then dissociate from the rest of the receptor. Its function is as follows. Orphan adhesion G-protein coupled receptor (aGPCR), which mediates synapse specificity. Ligand binding causes a conformation change that triggers signaling via guanine nucleotide-binding proteins (G proteins) and modulates the activity of downstream effectors. ADGRL3 is coupled with different classes of G alpha proteins, such as G(12)/G(13), G(s), G(i) or G(q), depending on the context. Coupling to G(12)/G(13) G proteins, which mediates the activation Rho small GTPases is the most efficient. Following G-protein coupled receptor activation, associates with cell adhesion molecules that are expressed at the surface of adjacent cells to direct synapse specificity. Specifically mediates the establishment of Schaffer-collateral synapses formed by CA3-region axons on CA1-region pyramidal neurons in the hippocampus. Localizes to postsynaptic spines in excitatory synapses in the S.oriens and S.radiatum and interacts with presynaptic cell adhesion molecules FLRT3 and TENM2, promoting synapse formation. Plays a role in the development of glutamatergic synapses in the cortex. Important in determining the connectivity rates between the principal neurons in the cortex. In terms of biological role, orphan adhesion G-protein coupled receptor (aGPCR), which mediates synapse specificity. Ligand binding causes a conformation change that triggers signaling via guanine nucleotide-binding proteins (G proteins) and modulates the activity of downstream effectors, such as adenylate cyclase. Isoform 1 is specifically coupled to G(s) G proteins and mediates activation of adenylate cyclase activity. Following G-protein coupled receptor activation, undergoes liquid-liquid phase transition, associates with (1) cell adhesion molecules that are expressed at the surface of adjacent cells, as well as (2) PDZ-containing proteins, such as SHANK3 and DLG4, in the cytoplasm to direct synapse formation. In Rattus norvegicus (Rat), this protein is Adhesion G protein-coupled receptor L3.